We begin with the raw amino-acid sequence, 113 residues long: Protein USP1 (113 aa).

The signal sequence occupies residues 1 to 18 (MKITMLFAALSAASGAFA). A run of 6 repeats spans residues 32-37 (IGAGVG), 40-45 (IGAGVG), 46-49 (PYGY), 50-53 (PYGA), 59-65 (LQLLPLR), and 69-75 (LQWIPLR). The segment at 32-45 (IGAGVGIGIGAGVG) is 2 X 6 AA repeats. The segment at 46 to 53 (PYGYPYGA) is 2 X 4 AA approximate tandem repeats. The interval 59-75 (LQLLPLRWLSLQWIPLR) is 2 X 7 AA approximate repeats.

It is found in the secreted. In Puccinia graminis (Black stem rust fungus), this protein is Protein USP1 (USP1).